A 395-amino-acid chain; its full sequence is Xylose isomerase (395 aa).

Catalysis depends on residues histidine 54 and glutamate 57. Residues 80 to 108 (AVPAGAGRDRHEGADGDDEPVHAPGCSRD) form a disordered region. Mg(2+)-binding residues include glutamate 189, glutamate 225, histidine 228, aspartate 253, aspartate 263, aspartate 265, and aspartate 295.

Belongs to the xylose isomerase family. In terms of assembly, homotetramer. The cofactor is Mg(2+).

It is found in the cytoplasm. The enzyme catalyses alpha-D-xylose = alpha-D-xylulofuranose. The polypeptide is Xylose isomerase (Streptomyces lividans).